Reading from the N-terminus, the 411-residue chain is UPF0261 protein SACE_5696 (411 aa).

Belongs to the UPF0261 family.

The sequence is that of UPF0261 protein SACE_5696 from Saccharopolyspora erythraea (strain ATCC 11635 / DSM 40517 / JCM 4748 / NBRC 13426 / NCIMB 8594 / NRRL 2338).